Reading from the N-terminus, the 385-residue chain is Cytochrome b (385 aa).

The next 4 helical transmembrane spans lie at 34-54 (FGSLTGLCLALQIISGLLLTM), 78-99 (WFIRNVHISGASLFFTCMFIHI), 114-134 (WYSGVILFILSMLTAFLGYVL), and 179-199 (FLVLHFLMPFSMIAVSLIHLV). 2 residues coordinate heme b: H84 and H98. Residues H183 and H197 each coordinate heme b. A ubiquinone is bound at residue H202. Helical transmembrane passes span 227–247 (FKDILGFSFLLTFLITFSLLL), 289–309 (LAGIIALVMSLSVLLLMPILI), 321–341 (LMQVTFWLMVCNFIFLSWLGA), and 348–368 (FILMSQISSFIYFFIFFVMFP).

The protein belongs to the cytochrome b family. In terms of assembly, the cytochrome bc1 complex contains 3 respiratory subunits (MT-CYB, CYC1 and UQCRFS1), 2 core proteins (UQCRC1 and UQCRC2) and probably 6 low-molecular weight proteins. Heme b serves as cofactor.

The protein localises to the mitochondrion inner membrane. Its function is as follows. Component of the ubiquinol-cytochrome c reductase complex (complex III or cytochrome b-c1 complex) that is part of the mitochondrial respiratory chain. The b-c1 complex mediates electron transfer from ubiquinol to cytochrome c. Contributes to the generation of a proton gradient across the mitochondrial membrane that is then used for ATP synthesis. The protein is Cytochrome b (MT-CYB) of Eptatretus burgeri (Inshore hagfish).